A 196-amino-acid chain; its full sequence is Large ribosomal subunit protein mL66 (196 aa).

Residues 1–34 (MAALKALVSGCGRLLRGLLAGPAATSWSRLPARG) constitute a mitochondrion transit peptide.

It belongs to the bacterial ribosomal protein bS18 family. Mitochondrion-specific ribosomal protein mL66 subfamily. As to quaternary structure, component of the mitochondrial large ribosomal subunit (mt-LSU). Mature mammalian 55S mitochondrial ribosomes consist of a small (28S) and a large (39S) subunit. The 28S small subunit contains a 12S ribosomal RNA (12S mt-rRNA) and 30 different proteins. The 39S large subunit contains a 16S rRNA (16S mt-rRNA), a copy of mitochondrial valine transfer RNA (mt-tRNA(Val)), which plays an integral structural role, and 52 different proteins. mL66 forms a zinc-binding site with uL10m.

It is found in the mitochondrion. The chain is Large ribosomal subunit protein mL66 (MRPS18A) from Homo sapiens (Human).